The chain runs to 358 residues: Putative zinc metalloprotease BH06270 (358 aa).

A Zn(2+)-binding site is contributed by H7. Residue E8 is part of the active site. Residue H11 coordinates Zn(2+). 3 helical membrane passes run 89–111, 282–304, and 332–354; these read ATVF…FFFF, FLSL…LFPI, and IIFR…NDYF. The PDZ domain occupies 102–177; it reads TVVILTFFFF…IEFKMERSGQ (76 aa).

It belongs to the peptidase M50B family. Zn(2+) serves as cofactor.

The protein localises to the cell inner membrane. In Bartonella henselae (strain ATCC 49882 / DSM 28221 / CCUG 30454 / Houston 1) (Rochalimaea henselae), this protein is Putative zinc metalloprotease BH06270.